A 526-amino-acid polypeptide reads, in one-letter code: Outer capsid protein VP5 (526 aa).

An involved in membrane permeabilization region spans residues Met1–Glu42.

The protein belongs to the orbivirus VP5 family.

Its subcellular location is the virion. VP5 protein is one of the two proteins (with VP2) which constitute the virus particle outer capsid. Acts as a membrane permeabilization protein that mediates release of viral particles from endosomal compartments into the cytoplasm. Permeabilization activity is probably negatively regulated by VP2 and is triggered by endosomal degradation of VP2 and exposure to low pH. This chain is Outer capsid protein VP5 (Segment-6), found in Bluetongue virus 13 (isolate USA) (BTV 13).